Consider the following 398-residue polypeptide: 1-deoxy-D-xylulose 5-phosphate reductoisomerase (398 aa).

NADPH is bound by residues threonine 11, glycine 12, serine 13, isoleucine 14, arginine 38, asparagine 39, and asparagine 125. 1-deoxy-D-xylulose 5-phosphate is bound at residue lysine 126. Position 127 (glutamate 127) interacts with NADPH. Residue aspartate 151 participates in Mn(2+) binding. 4 residues coordinate 1-deoxy-D-xylulose 5-phosphate: serine 152, glutamate 153, serine 179, and histidine 202. Mn(2+) is bound at residue glutamate 153. Glycine 208 provides a ligand contact to NADPH. Residues serine 215, asparagine 220, lysine 221, and glutamate 224 each contribute to the 1-deoxy-D-xylulose 5-phosphate site. Glutamate 224 is a binding site for Mn(2+).

The protein belongs to the DXR family. It depends on Mg(2+) as a cofactor. Requires Mn(2+) as cofactor.

It catalyses the reaction 2-C-methyl-D-erythritol 4-phosphate + NADP(+) = 1-deoxy-D-xylulose 5-phosphate + NADPH + H(+). The protein operates within isoprenoid biosynthesis; isopentenyl diphosphate biosynthesis via DXP pathway; isopentenyl diphosphate from 1-deoxy-D-xylulose 5-phosphate: step 1/6. Its function is as follows. Catalyzes the NADPH-dependent rearrangement and reduction of 1-deoxy-D-xylulose-5-phosphate (DXP) to 2-C-methyl-D-erythritol 4-phosphate (MEP). In Burkholderia multivorans (strain ATCC 17616 / 249), this protein is 1-deoxy-D-xylulose 5-phosphate reductoisomerase.